The following is a 438-amino-acid chain: 23S rRNA (uracil(1939)-C(5))-methyltransferase RlmD (438 aa).

Residues Lys-10–Lys-69 form the TRAM domain. Residues Cys-82, Cys-88, Cys-91, and Cys-169 each contribute to the [4Fe-4S] cluster site. Residues Gln-272, Phe-301, Asn-306, Glu-322, Asn-349, and Asp-370 each contribute to the S-adenosyl-L-methionine site. Residue Cys-396 is the Nucleophile of the active site.

Belongs to the class I-like SAM-binding methyltransferase superfamily. RNA M5U methyltransferase family. RlmD subfamily.

The enzyme catalyses uridine(1939) in 23S rRNA + S-adenosyl-L-methionine = 5-methyluridine(1939) in 23S rRNA + S-adenosyl-L-homocysteine + H(+). Catalyzes the formation of 5-methyl-uridine at position 1939 (m5U1939) in 23S rRNA. This is 23S rRNA (uracil(1939)-C(5))-methyltransferase RlmD from Aliivibrio fischeri (strain MJ11) (Vibrio fischeri).